We begin with the raw amino-acid sequence, 380 residues long: Putative T-box protein 40 (380 aa).

The T-box DNA-binding region spans 11–192 (MAEEDRWLTQ…KNATFENRLD (182 aa)). A disordered region spans residues 188 to 215 (ENRLDGGNKRKNTNSREEPSSKRSKNET). The segment covering 189 to 215 (NRLDGGNKRKNTNSREEPSSKRSKNET) has biased composition (basic and acidic residues).

The protein resides in the nucleus. The sequence is that of Putative T-box protein 40 (tbx-40) from Caenorhabditis elegans.